Reading from the N-terminus, the 454-residue chain is Sensor histidine kinase YkoH (454 aa).

The Cytoplasmic segment spans residues 1 to 12 (MKLKTKIHLYTS). Residues 13-33 (ISLLILLILVHTAVYLIFSSA) traverse the membrane as a helical segment. Over 34-153 (LTSKDAARLA…NTEESLFLLK (120 aa)) the chain is Extracellular. The helical transmembrane segment at 154-174 (IILIAASAAVCIASFFAGSLL) threads the bilayer. Topologically, residues 175–454 (ARRIINPIRR…QFSEQNGGGR (280 aa)) are cytoplasmic. In terms of domain architecture, HAMP spans 176–230 (RRIINPIRRLMITMKDIQRDKEFKTISLEGQSNDELYQMGLTFNEMAMMLKEHYD). In terms of domain architecture, Histidine kinase spans 238 to 450 (DASHELKTPL…AVTMQFSEQN (213 aa)). Position 241 is a phosphohistidine; by autocatalysis (His-241).

The protein resides in the cell membrane. It catalyses the reaction ATP + protein L-histidine = ADP + protein N-phospho-L-histidine.. In terms of biological role, probable member of the two-component regulatory system YkoH/YkoG. Potentially phosphorylates YkoG. This Bacillus subtilis (strain 168) protein is Sensor histidine kinase YkoH (ykoH).